The primary structure comprises 374 residues: MKFELDTTDGRARRGRLVFERGTVETPAFMPVGTYGTVKGMTPEEVRATGADILLGNTFHLWLRPGEEIMRKHGDLHDFMNWQRPILTDSGGFQVFSLGDIRKITEEGVHFRSPINGEKIFMDAEKSMQIQYSLGSDVVMIFDECTPYPATHDEARKSMQMSLRWAQRSRDEFDRLENPNSLFGIIQGSVYEDLRDESLKGLLEIGYDGYAVGGLAVGEPKEDMHRILEHVCPQIPADKPRYLMGVGKPEDLVEGVRRGVDMFDCVMPTRNARNGHLFTSEGVIKIRNARHRDDTSPLDAKCDCYTCKNYSRAYLYHLDRCNEILGARLNTIHNLRYYQMLMEGLRGAIETGTLDAFVEEFYTSQGREVPKLSD.

Aspartate 89 acts as the Proton acceptor in catalysis. Substrate is bound by residues 89–93 (DSGGF), aspartate 143, glutamine 187, and glycine 214. The segment at 245 to 251 (GVGKPED) is RNA binding. Aspartate 264 functions as the Nucleophile in the catalytic mechanism. Residues 269 to 273 (TRNAR) form an RNA binding; important for wobble base 34 recognition region. Zn(2+) is bound by residues cysteine 302, cysteine 304, cysteine 307, and histidine 333.

It belongs to the queuine tRNA-ribosyltransferase family. Homodimer. Within each dimer, one monomer is responsible for RNA recognition and catalysis, while the other monomer binds to the replacement base PreQ1. The cofactor is Zn(2+).

It carries out the reaction 7-aminomethyl-7-carbaguanine + guanosine(34) in tRNA = 7-aminomethyl-7-carbaguanosine(34) in tRNA + guanine. The protein operates within tRNA modification; tRNA-queuosine biosynthesis. Catalyzes the base-exchange of a guanine (G) residue with the queuine precursor 7-aminomethyl-7-deazaguanine (PreQ1) at position 34 (anticodon wobble position) in tRNAs with GU(N) anticodons (tRNA-Asp, -Asn, -His and -Tyr). Catalysis occurs through a double-displacement mechanism. The nucleophile active site attacks the C1' of nucleotide 34 to detach the guanine base from the RNA, forming a covalent enzyme-RNA intermediate. The proton acceptor active site deprotonates the incoming PreQ1, allowing a nucleophilic attack on the C1' of the ribose to form the product. After dissociation, two additional enzymatic reactions on the tRNA convert PreQ1 to queuine (Q), resulting in the hypermodified nucleoside queuosine (7-(((4,5-cis-dihydroxy-2-cyclopenten-1-yl)amino)methyl)-7-deazaguanosine). In Shewanella loihica (strain ATCC BAA-1088 / PV-4), this protein is Queuine tRNA-ribosyltransferase.